Reading from the N-terminus, the 489-residue chain is Cytochrome P450 monooxygenase tazI (489 aa).

Residue Cys433 coordinates heme.

It belongs to the cytochrome P450 family. Heme is required as a cofactor.

The protein operates within secondary metabolite biosynthesis. In terms of biological role, cytochrome P450 monooxygenase; part of the gene cluster that mediates the biosynthesis of azaterrilone A and other azaphilones, a class of fungal metabolites characterized by a highly oxygenated pyrano-quinone bicyclic core and exhibiting a broad range of bioactivities. The first step of the pathway begins with the non-reducing polyketide synthase tazA that assembles one acetyl-CoA starter unit, five malonyl-CoA units, and catalyzes a series of Claisen condensations, methylation, PT-mediated cyclization, and finally releases the first hexaketide precursor through the R-domain. The tazA product then undergoes reduction on its terminal ketone and the following pyran-ring formation by yet undetermined enzyme(s). Dehydration and enoyl reduction, possibly involving the trans-enoyl reductase tazE leads to the next intermediate. TazD is predicted as an acetyltransferase and might catalyze the acetylation steps leading to the synthesis of azaterrilone A. Azaterrilone A is not the final product of the taz pathway and both the highly reducing polyketide synthase tazB and the dual enzyme tazHJ catalyze late steps of the pathway, leading to the production of the 2 final stereoisomers that contain additional polyketide modification whose structures have still to be determined. The polypeptide is Cytochrome P450 monooxygenase tazI (Aspergillus terreus (strain NIH 2624 / FGSC A1156)).